We begin with the raw amino-acid sequence, 97 residues long: Co-chaperonin GroES (97 aa).

The protein belongs to the GroES chaperonin family. As to quaternary structure, heptamer of 7 subunits arranged in a ring. Interacts with the chaperonin GroEL.

It is found in the cytoplasm. Functionally, together with the chaperonin GroEL, plays an essential role in assisting protein folding. The GroEL-GroES system forms a nano-cage that allows encapsulation of the non-native substrate proteins and provides a physical environment optimized to promote and accelerate protein folding. GroES binds to the apical surface of the GroEL ring, thereby capping the opening of the GroEL channel. The sequence is that of Co-chaperonin GroES from Burkholderia cepacia (Pseudomonas cepacia).